Reading from the N-terminus, the 346-residue chain is Outer membrane protein A (346 aa).

The signal sequence occupies residues 1–21; that stretch reads MKKTAIAIAVALAGFATVAQA. Transmembrane regions (beta stranded) follow at residues 27–37, 55–66, 70–78, 96–107, 112–120, 142–151, 156–163, and 182–190; these read TWYTGAKLGWS, QLGAGAFGGYQV, VGFEMGYDW, QGVQLTAKLGYP, LDIYTRLGG, PVFAGGVEYA, IATRLEYQ, and MLSLGVSYR. The hinge-like stretch occupies residues 197 to 208; the sequence is APVVAPAPAPAP. Tandem repeats lie at residues 201–202, 203–204, 205–206, and 207–208. The 4 X 2 AA tandem repeats of A-P stretch occupies residues 201–208; that stretch reads APAPAPAP. One can recognise an OmpA-like domain in the interval 210–338; sequence VQTKHFTLKS…RVEIEVKGIK (129 aa). C311 and C323 are joined by a disulfide.

It belongs to the outer membrane OOP (TC 1.B.6) superfamily. OmpA family. As to quaternary structure, monomer and homodimer.

Its subcellular location is the cell outer membrane. Functionally, with TolR probably plays a role in maintaining the position of the peptidoglycan cell wall in the periplasm. Acts as a porin with low permeability that allows slow penetration of small solutes; an internal gate slows down solute passage. Its function is as follows. Required for conjugation with F-type plasmids; probably serves as the mating receptor on recipient cells. This is Outer membrane protein A from Escherichia coli O157:H7.